The following is a 106-amino-acid chain: MGKTNDWLDFEQLAEEKVRDALKPPSMYKVILVNDDYTPMEFVIDVLQKFFSYDVERATQLMLAVHYQGKAICGVFTAEVAETKVAMVNKYARENEHPLLCTLEKA.

Belongs to the ClpS family. As to quaternary structure, binds to the N-terminal domain of the chaperone ClpA.

In terms of biological role, involved in the modulation of the specificity of the ClpAP-mediated ATP-dependent protein degradation. The sequence is that of ATP-dependent Clp protease adapter protein ClpS from Escherichia coli O127:H6 (strain E2348/69 / EPEC).